Reading from the N-terminus, the 56-residue chain is UPF0391 membrane protein HCH_04387 (56 aa).

A run of 2 helical transmembrane segments spans residues 6 to 26 and 30 to 50; these read IVFF…IAAA and IAQI…IAGG.

The protein belongs to the UPF0391 family.

Its subcellular location is the cell membrane. This chain is UPF0391 membrane protein HCH_04387, found in Hahella chejuensis (strain KCTC 2396).